Consider the following 282-residue polypeptide: Acetylglutamate kinase (282 aa).

Substrate contacts are provided by residues 62–63 (GG), Arg-84, and Asn-178.

The protein belongs to the acetylglutamate kinase family. ArgB subfamily.

It is found in the cytoplasm. It carries out the reaction N-acetyl-L-glutamate + ATP = N-acetyl-L-glutamyl 5-phosphate + ADP. The protein operates within amino-acid biosynthesis; L-arginine biosynthesis; N(2)-acetyl-L-ornithine from L-glutamate: step 2/4. Catalyzes the ATP-dependent phosphorylation of N-acetyl-L-glutamate. This Kosmotoga olearia (strain ATCC BAA-1733 / DSM 21960 / TBF 19.5.1) protein is Acetylglutamate kinase.